The following is a 275-amino-acid chain: Multivesicular body subunit 12A (275 aa).

An MABP domain is found at 5 to 145; the sequence is STPITGLAWI…GLVFWCRKGS (141 aa). The short motif at 151–156 is the SH3-binding element; the sequence is PTPKPR. The 52-residue stretch at 216–267 folds into the UMA domain; sequence IDGIPFTIHPMFENTINNSSVAASDFRDLHIKTLSEIESEYNYGFVVEKTAA.

It belongs to the MVB12 family. Component of the ESCRT-I complex (endosomal sorting complex required for transport I).

It localises to the cytoplasm. It is found in the endosome. Its subcellular location is the late endosome membrane. Component of the ESCRT-I complex, a regulator of vesicular trafficking process. Required for the sorting of endocytic ubiquitinated cargos into multivesicular bodies. The sequence is that of Multivesicular body subunit 12A (mvb12a) from Xenopus laevis (African clawed frog).